Consider the following 503-residue polypeptide: Cytochrome P450 3A17 (503 aa).

Cysteine 442 lines the heme pocket.

This sequence belongs to the cytochrome P450 family. Heme is required as a cofactor.

It is found in the endoplasmic reticulum membrane. The protein localises to the microsome membrane. It catalyses the reaction an organic molecule + reduced [NADPH--hemoprotein reductase] + O2 = an alcohol + oxidized [NADPH--hemoprotein reductase] + H2O + H(+). Its function is as follows. Cytochromes P450 are a group of heme-thiolate monooxygenases. In liver microsomes, this enzyme is involved in an NADPH-dependent electron transport pathway. It oxidizes a variety of structurally unrelated compounds, including steroids, fatty acids, and xenobiotics. The chain is Cytochrome P450 3A17 (CYP3A17) from Cavia porcellus (Guinea pig).